A 250-amino-acid polypeptide reads, in one-letter code: Probable transcriptional regulatory protein RHA1_ro06891 (250 aa).

It belongs to the TACO1 family.

It is found in the cytoplasm. This is Probable transcriptional regulatory protein RHA1_ro06891 from Rhodococcus jostii (strain RHA1).